Reading from the N-terminus, the 820-residue chain is Probable protease Ga0182885_104520 (820 aa).

The protein belongs to the peptidase C25 family.

In terms of biological role, probably a dedicated protease for substrate gasdermin bGSDM; cleaves the bGSDM precursor, releasing the pore-forming moiety, which integrates into the membrane and triggers cell death. Involved in defense against bacteriophages. Expression of bacterial gasdermin (bGSDM) and this neighboring protease is toxic in E.coli. This Desulfuromonadales bacterium protein is Probable protease Ga0182885_104520.